The primary structure comprises 181 residues: Nucleoside triphosphate/diphosphate phosphatase (181 aa).

Arginine 26 (proton donor) is an active-site residue. Residues asparagine 90, aspartate 106, aspartate 108, aspartate 110, aspartate 123, and glutamate 126 each contribute to the Mg(2+) site.

It belongs to the Ntdp family. Mg(2+) is required as a cofactor.

It carries out the reaction a ribonucleoside 5'-triphosphate + H2O = a ribonucleoside 5'-diphosphate + phosphate + H(+). The enzyme catalyses a ribonucleoside 5'-diphosphate + H2O = a ribonucleoside 5'-phosphate + phosphate + H(+). Its function is as follows. Has nucleoside phosphatase activity towards nucleoside triphosphates and nucleoside diphosphates. The chain is Nucleoside triphosphate/diphosphate phosphatase from Ligilactobacillus salivarius (strain UCC118) (Lactobacillus salivarius).